A 440-amino-acid polypeptide reads, in one-letter code: Thymidine phosphorylase (440 aa).

Belongs to the thymidine/pyrimidine-nucleoside phosphorylase family. As to quaternary structure, homodimer.

The catalysed reaction is thymidine + phosphate = 2-deoxy-alpha-D-ribose 1-phosphate + thymine. Its pathway is pyrimidine metabolism; dTMP biosynthesis via salvage pathway; dTMP from thymine: step 1/2. The enzymes which catalyze the reversible phosphorolysis of pyrimidine nucleosides are involved in the degradation of these compounds and in their utilization as carbon and energy sources, or in the rescue of pyrimidine bases for nucleotide synthesis. This chain is Thymidine phosphorylase, found in Cronobacter sakazakii (strain ATCC BAA-894) (Enterobacter sakazakii).